The chain runs to 540 residues: CBL-interacting protein kinase 12 (540 aa).

The segment at 1–23 (MLMATVSPARREPTPQAVRASPM) is disordered. Residues 46–300 (YELGRVLGQG…VPEIIESDWF (255 aa)) enclose the Protein kinase domain. ATP-binding positions include 52 to 60 (LGQGSFAKV) and Lys-75. Asp-168 acts as the Proton acceptor in catalysis. Residues 186-215 (DFGLAAGPDQFDPDGLLHTFCGTPAYVAPE) form an activation loop region. Residues 333–348 (PPPLGLAPPVPPPPQG) show a composition bias toward pro residues. The disordered stretch occupies residues 333–380 (PPPLGLAPPVPPPPQGDDPDGSGSESDSSVVSCPATLSTGESQRVRGS). The segment covering 353 to 364 (GSGSESDSSVVS) has biased composition (low complexity). The NAF domain maps to 370–406 (STGESQRVRGSLPRPASLNAFDIISFSKGFNLSGLFE). Positions 409 to 438 (GNEIRFVSGEPMSDIVKKLEEIAKVKSFTV) are PPI.

This sequence belongs to the protein kinase superfamily. CAMK Ser/Thr protein kinase family. SNF1 subfamily. Requires Mg(2+) as cofactor. In terms of processing, autophosphorylated. As to expression, expressed at low levels in leaf blades.

The enzyme catalyses L-seryl-[protein] + ATP = O-phospho-L-seryl-[protein] + ADP + H(+). It catalyses the reaction L-threonyl-[protein] + ATP = O-phospho-L-threonyl-[protein] + ADP + H(+). In terms of biological role, involved in drought stress tolerance. CIPK serine-threonine protein kinases interact with CBL proteins. Binding of a CBL protein to the regulatory NAF domain of CIPK protein lead to the activation of the kinase in a calcium-dependent manner. This Oryza sativa subsp. japonica (Rice) protein is CBL-interacting protein kinase 12 (CIPK12).